The following is a 305-amino-acid chain: Serine/threonine-protein kinase 16 (305 aa).

Residue Gly-2 is the site of N-myristoyl glycine attachment. Residues Cys-6 and Cys-8 are each lipidated (S-palmitoyl cysteine). Residues 20–293 (YLFVQKLGEG…PVLLSQLEAL (274 aa)) form the Protein kinase domain. Residues 26 to 34 (LGEGGFSYV) and Lys-49 each bind ATP. The active-site Proton acceptor is Asp-148. The interval 166 to 202 (DLGSMNQACIQVEGSRQALALQDWAAQRCTISYRAPE) is activation loop. At Ser-197 the chain carries Phosphoserine; by autocatalysis. A Phosphotyrosine; by autocatalysis modification is found at Tyr-198.

Belongs to the protein kinase superfamily. Ser/Thr protein kinase family. Monomer. Interacts with DRG1 (via its N-terminal); the interaction phosphorylates DRG1. In terms of processing, mainly autophosphorylated on serine/threonine residues. Also autophosphorylated on Tyr-198. In terms of tissue distribution, ubiquitously expressed at low levels. Relatively higher levels in testis, kidney and liver.

It localises to the cytoplasm. It is found in the perinuclear region. The protein resides in the membrane. The enzyme catalyses L-seryl-[protein] + ATP = O-phospho-L-seryl-[protein] + ADP + H(+). It catalyses the reaction L-threonyl-[protein] + ATP = O-phospho-L-threonyl-[protein] + ADP + H(+). It carries out the reaction L-tyrosyl-[protein] + ATP = O-phospho-L-tyrosyl-[protein] + ADP + H(+). Its function is as follows. Membrane-associated protein kinase that phosphorylates on serine and threonine residues. In vitro substrates include DRG1, ENO1 and EIF4EBP1. Also autophosphorylates. May be involved in secretory vesicle trafficking or intracellular signaling. May have a role in regulating stromal-epithelial interactions that occur during ductal morphogenesis in the mammary gland. May be involved in TGF-beta signaling. Able to autophosphorylate on Tyr residue; it is however unclear whether it has tyrosine-protein kinase toward other proteins. The protein is Serine/threonine-protein kinase 16 (Stk16) of Mus musculus (Mouse).